Here is a 615-residue protein sequence, read N- to C-terminus: uncharacterized protein (615 aa).

Catalysis depends on Asp403, which acts as the Proton acceptor. Glu406 acts as the Proton donor in catalysis.

This sequence belongs to the glycosyl hydrolase 15 family.

This is an uncharacterized protein from Methanocaldococcus jannaschii (strain ATCC 43067 / DSM 2661 / JAL-1 / JCM 10045 / NBRC 100440) (Methanococcus jannaschii).